A 524-amino-acid chain; its full sequence is Serine/threonine-protein kinase PAK 2 (524 aa).

Positions 1-81 are disordered; that stretch reads MSDNGELEDK…PEISPPSDFE (81 aa). At S2 the chain carries N-acetylserine. Phosphoserine is present on residues S2, S20, S55, and S58. A Phosphothreonine modification is found at T60. The residue at position 62 (K62) is an N6-acetyllysine. S64 carries the phosphoserine modification. A compositionally biased stretch (basic and acidic residues) spans 67–81; sequence KEKERPEISPPSDFE. The GTPase-binding stretch occupies residues 69–112; it reads KERPEISPPSDFEHTIHVGFDAVTGEFTGMPEQWARLLQTSNIT. An autoregulatory region region spans residues 69–137; that stretch reads KERPEISPPS…KFYDSNTVKQ (69 aa). The region spanning 74 to 87 is the CRIB domain; sequence ISPPSDFEHTIHVG. An N6-acetyllysine modification is found at K128. At T134 the chain carries Phosphothreonine. Y139 is subject to Phosphotyrosine. S141 bears the Phosphoserine mark. Positions 142-188 are disordered; sequence FTPPEKDGFPSGTPALNTKGSETSAVVTEEDDDDEDAAPPVIAPRPD. T143 bears the Phosphothreonine mark. The residue at position 152 (S152) is a Phosphoserine. Residues T154, T159, and T169 each carry the phosphothreonine modification. Residues 155 to 167 are compositionally biased toward polar residues; sequence PALNTKGSETSAV. Residues 169–178 show a composition bias toward acidic residues; the sequence is TEEDDDDEDA. S197 is modified (phosphoserine). A disordered region spans residues 204 to 228; that stretch reads APVGDSNVDSGAKSSDKQKKKAKMT. Residues 245 to 251 carry the Nuclear localization signal motif; that stretch reads PKKKYTR. The region spanning 249–499 is the Protein kinase domain; the sequence is YTRYEKIGQG…SAKELLQHPF (251 aa). Residues 255-263 and K278 contribute to the ATP site; that span reads IGQGASGTV. The active-site Proton acceptor is the R367. A Phosphothreonine; by autocatalysis modification is found at T402.

The protein belongs to the protein kinase superfamily. STE Ser/Thr protein kinase family. STE20 subfamily. As to quaternary structure, interacts tightly with GTP-bound but not GDP-bound CDC42/p21 and RAC1. Interacts with SH3MD4. Interacts with SCRIB. Interacts with ARHGEF7 and GIT1. PAK-2p34 interacts with ARHGAP10. Interacts with RAC1. Post-translationally, full-length PAK2 is autophosphorylated when activated by CDC42/p21. Following cleavage, both peptides, PAK-2p27 and PAK-2p34, become highly autophosphorylated. Autophosphorylation of PAK-2p27 can occur in the absence of any effectors and is dependent on phosphorylation of Thr-402, because PAK-2p27 is acting as an exogenous substrate. During apoptosis proteolytically cleaved by caspase-3 or caspase-3-like proteases to yield active PAK-2p34. In terms of processing, ubiquitinated, leading to its proteasomal degradation.

The protein resides in the cytoplasm. The protein localises to the nucleus. It localises to the perinuclear region. It is found in the membrane. It catalyses the reaction L-seryl-[protein] + ATP = O-phospho-L-seryl-[protein] + ADP + H(+). The enzyme catalyses L-threonyl-[protein] + ATP = O-phospho-L-threonyl-[protein] + ADP + H(+). Activated by binding small G proteins. Binding of GTP-bound CDC42 or RAC1 to the autoregulatory region releases monomers from the autoinhibited dimer, enables phosphorylation of Thr-402 and allows the kinase domain to adopt an active structure. Following caspase cleavage, autophosphorylated PAK-2p34 is constitutively active. Serine/threonine protein kinase that plays a role in a variety of different signaling pathways including cytoskeleton regulation, cell motility, cell cycle progression, apoptosis or proliferation. Acts as a downstream effector of the small GTPases CDC42 and RAC1. Activation by the binding of active CDC42 and RAC1 results in a conformational change and a subsequent autophosphorylation on several serine and/or threonine residues. Full-length PAK2 stimulates cell survival and cell growth. Phosphorylates MAPK4 and MAPK6 and activates the downstream target MAPKAPK5, a regulator of F-actin polymerization and cell migration. Phosphorylates JUN and plays an important role in EGF-induced cell proliferation. Phosphorylates many other substrates including histone H4 to promote assembly of H3.3 and H4 into nucleosomes, BAD, ribosomal protein S6, or MBP. Phosphorylates CASP7, thereby preventing its activity. Additionally, associates with ARHGEF7 and GIT1 to perform kinase-independent functions such as spindle orientation control during mitosis. On the other hand, apoptotic stimuli such as DNA damage lead to caspase-mediated cleavage of PAK2, generating PAK-2p34, an active p34 fragment that translocates to the nucleus and promotes cellular apoptosis involving the JNK signaling pathway. Caspase-activated PAK2 phosphorylates MKNK1 and reduces cellular translation. The sequence is that of Serine/threonine-protein kinase PAK 2 (Pak2) from Mus musculus (Mouse).